The primary structure comprises 457 residues: PDZ and LIM domain protein 7 (457 aa).

Positions 1–85 (MDSFKVVLEG…RLSLGLSRAQ (85 aa)) constitute a PDZ domain. At Ser-78 the chain carries Phosphoserine. Disordered regions lie at residues 81-132 (LSRA…LSQN) and 186-226 (FMKK…PWAV). Position 96 is a phosphothreonine (Thr-96). Arg-103 carries the post-translational modification Asymmetric dimethylarginine. Phosphoserine is present on Ser-111. A Phosphoserine modification is found at Ser-247. LIM zinc-binding domains lie at 280–338 (PVCH…VRYA), 339–398 (PSCA…MFGT), and 399–457 (KCRG…FSHV).

As to quaternary structure, binds via its LIM zinc-binding 3 domain (LIM 3) domain to endocytic codes of INSR, but not with those of IGF1R, LDLR, TFRC, or EGFR. Interacts with various PKC isoforms through the LIM zinc-binding domains. Binds to RET in a phosphorylation-independent manner via its LIM zinc-binding 2 domain (LIM 2). Probably part of a complex with SHC and the RET dimer. Interacts with TPM2, TBX4 and TBX5. Interacts (via LIM domains) with SIPA1L1. Expressed in kidney, heart, brain, lung, and skeletal muscle. Overexpression results in the synthesis of an unidentified soluble factor which acts on cells in the osteoblast lineage causing them to differentiate and secrete BMP-2.

Its subcellular location is the cytoplasm. It is found in the cytoskeleton. Its function is as follows. May function as a scaffold on which the coordinated assembly of proteins can occur. May play a role as an adapter that, via its PDZ domain, localizes LIM-binding proteins to actin filaments of both skeletal muscle and nonmuscle tissues. Involved in both of the two fundamental mechanisms of bone formation, direct bone formation (e.g. embryonic flat bones mandible and cranium), and endochondral bone formation (e.g. embryonic long bone development). Plays a role during fracture repair. Involved in BMP6 signaling pathway. In Rattus norvegicus (Rat), this protein is PDZ and LIM domain protein 7 (Pdlim7).